A 337-amino-acid chain; its full sequence is Thymidylate synthase (337 aa).

Residues Arg74 and 199–200 (RR) contribute to the dUMP site. The Nucleophile role is filled by Cys219. Residues 239 to 242 (RSGD), Asn250, and 280 to 282 (HIY) contribute to the dUMP site. Asp242 contacts (6R)-5,10-methylene-5,6,7,8-tetrahydrofolate. Ala336 is a (6R)-5,10-methylene-5,6,7,8-tetrahydrofolate binding site.

Belongs to the thymidylate synthase family. Homodimer.

The enzyme catalyses dUMP + (6R)-5,10-methylene-5,6,7,8-tetrahydrofolate = 7,8-dihydrofolate + dTMP. The protein operates within pyrimidine metabolism; dTTP biosynthesis. The protein is Thymidylate synthase (70) of Homo sapiens (Human).